Consider the following 191-residue polypeptide: MSLISRLRAVVAGDDFLDSDFDELDYETSDDFENFNRGKKEGSTEMATISQANPFDGRSGFPPSNVIGMPGISTNDSEVSLMEPRSFDEMPRVIQALRERKTVILNLTMMEPDQAQRAVDFVAGGTFAIDGHQERVGESIFLFAPSCVTVTNSFQEEASPSNMSNKGNDLISKETSPAPEPAWGETVATAL.

Over residues 156-167 (EEASPSNMSNKG) the composition is skewed to polar residues. The interval 156 to 191 (EEASPSNMSNKGNDLISKETSPAPEPAWGETVATAL) is disordered.

The protein belongs to the SepF family. Homodimer. Interacts with FtsZ.

Its subcellular location is the cytoplasm. In terms of biological role, cell division protein that is part of the divisome complex and is recruited early to the Z-ring. Probably stimulates Z-ring formation, perhaps through the cross-linking of FtsZ protofilaments. Its function overlaps with FtsA. The chain is Cell division protein SepF from Prochlorococcus marinus (strain NATL2A).